We begin with the raw amino-acid sequence, 492 residues long: Cytochrome P450 2B19 (492 aa).

Ser-129 carries the phosphoserine; by PKA modification. Cys-437 is a binding site for heme.

The protein belongs to the cytochrome P450 family. Requires heme as cofactor. In terms of tissue distribution, expressed only in differentiated keratinocytes in skin.

It is found in the endoplasmic reticulum membrane. The protein resides in the microsome membrane. It carries out the reaction an organic molecule + reduced [NADPH--hemoprotein reductase] + O2 = an alcohol + oxidized [NADPH--hemoprotein reductase] + H2O + H(+). In terms of biological role, cytochromes P450 are a group of heme-thiolate monooxygenases. In liver microsomes, this enzyme is involved in an NADPH-dependent electron transport pathway. It oxidizes a variety of structurally unrelated compounds, including steroids, fatty acids, and xenobiotics. In Mus musculus (Mouse), this protein is Cytochrome P450 2B19 (Cyp2b19).